We begin with the raw amino-acid sequence, 335 residues long: Glyceraldehyde-3-phosphate dehydrogenase (335 aa).

NAD(+) contacts are provided by residues 11–12 (RI), Asp-33, and Lys-78. D-glyceraldehyde 3-phosphate-binding positions include 148–150 (SST), Thr-179, 208–209 (TG), and Arg-231. Asn-313 serves as a coordination point for NAD(+).

The protein belongs to the glyceraldehyde-3-phosphate dehydrogenase family. As to quaternary structure, homotetramer.

The protein localises to the cytoplasm. It catalyses the reaction D-glyceraldehyde 3-phosphate + phosphate + NAD(+) = (2R)-3-phospho-glyceroyl phosphate + NADH + H(+). Its pathway is carbohydrate degradation; glycolysis; pyruvate from D-glyceraldehyde 3-phosphate: step 1/5. The sequence is that of Glyceraldehyde-3-phosphate dehydrogenase (GPD) from Pleurotus sajor-caju (Oyster mushroom).